The primary structure comprises 247 residues: Probable transcriptional regulatory protein GAU_0635 (247 aa).

It belongs to the TACO1 family.

It localises to the cytoplasm. In Gemmatimonas aurantiaca (strain DSM 14586 / JCM 11422 / NBRC 100505 / T-27), this protein is Probable transcriptional regulatory protein GAU_0635.